A 205-amino-acid chain; its full sequence is Recombination protein RecR (205 aa).

A C4-type zinc finger spans residues 60-75 (CKVCHNISDTETCRIC). Residues 83-178 (STICVVESIR…KLSVIARGIS (96 aa)) enclose the Toprim domain.

The protein belongs to the RecR family.

Its function is as follows. May play a role in DNA repair. It seems to be involved in an RecBC-independent recombinational process of DNA repair. It may act with RecF and RecO. This is Recombination protein RecR from Phocaeicola vulgatus (strain ATCC 8482 / DSM 1447 / JCM 5826 / CCUG 4940 / NBRC 14291 / NCTC 11154) (Bacteroides vulgatus).